Consider the following 252-residue polypeptide: NAD-dependent protein deacetylase (252 aa).

The Deacetylase sirtuin-type domain occupies 1–248; sequence MYLVEEAKKV…PEVISHIQSL (248 aa). Positions 26, 30, 37, 38, 102, 104, 105, and 120 each coordinate NAD(+). Residue Phe37 coordinates nicotinamide. 2 residues coordinate nicotinamide: Val104 and Asp105. His120 functions as the Proton acceptor in the catalytic mechanism. Zn(2+) is bound by residues Cys128, Cys131, Cys153, and Cys155. Residues Ser191, Ser192, Asn216, and Ile234 each coordinate NAD(+).

This sequence belongs to the sirtuin family. Class U subfamily. The cofactor is Zn(2+).

The protein localises to the cytoplasm. It catalyses the reaction N(6)-acetyl-L-lysyl-[protein] + NAD(+) + H2O = 2''-O-acetyl-ADP-D-ribose + nicotinamide + L-lysyl-[protein]. Functionally, NAD-dependent protein deacetylase which modulates the activities of several enzymes which are inactive in their acetylated form. Deacetylates the N-terminal lysine residue of Alba, the major archaeal chromatin protein and that, in turn, increases Alba's DNA binding affinity, thereby repressing transcription. This chain is NAD-dependent protein deacetylase, found in Sulfolobus acidocaldarius (strain ATCC 33909 / DSM 639 / JCM 8929 / NBRC 15157 / NCIMB 11770).